We begin with the raw amino-acid sequence, 369 residues long: tRNA 2-selenouridine synthase (369 aa).

The 125-residue stretch at 12–136 (FLDDIPLMDV…LRNFLFETTR (125 aa)) folds into the Rhodanese domain. Residue Cys-95 is the S-selanylcysteine intermediate of the active site.

This sequence belongs to the SelU family. As to quaternary structure, monomer.

It carries out the reaction 5-methylaminomethyl-2-thiouridine(34) in tRNA + selenophosphate + (2E)-geranyl diphosphate + H2O + H(+) = 5-methylaminomethyl-2-selenouridine(34) in tRNA + (2E)-thiogeraniol + phosphate + diphosphate. The catalysed reaction is 5-methylaminomethyl-2-thiouridine(34) in tRNA + (2E)-geranyl diphosphate = 5-methylaminomethyl-S-(2E)-geranyl-thiouridine(34) in tRNA + diphosphate. The enzyme catalyses 5-methylaminomethyl-S-(2E)-geranyl-thiouridine(34) in tRNA + selenophosphate + H(+) = 5-methylaminomethyl-2-(Se-phospho)selenouridine(34) in tRNA + (2E)-thiogeraniol. It catalyses the reaction 5-methylaminomethyl-2-(Se-phospho)selenouridine(34) in tRNA + H2O = 5-methylaminomethyl-2-selenouridine(34) in tRNA + phosphate. Functionally, involved in the post-transcriptional modification of the uridine at the wobble position (U34) of tRNA(Lys), tRNA(Glu) and tRNA(Gln). Catalyzes the conversion of 2-thiouridine (S2U-RNA) to 2-selenouridine (Se2U-RNA). Acts in a two-step process involving geranylation of 2-thiouridine (S2U) to S-geranyl-2-thiouridine (geS2U) and subsequent selenation of the latter derivative to 2-selenouridine (Se2U) in the tRNA chain. The polypeptide is tRNA 2-selenouridine synthase (Pseudomonas aeruginosa (strain ATCC 15692 / DSM 22644 / CIP 104116 / JCM 14847 / LMG 12228 / 1C / PRS 101 / PAO1)).